Consider the following 904-residue polypeptide: Dynamin-like protein C (904 aa).

Residues 44-102 are a coiled coil; the sequence is IAEAMALKMHEEEKKKREEKKRKRDNEELLSKQVRTKLENERKKLDDSESINASTNQEL. The interval 53 to 93 is disordered; sequence HEEEKKKREEKKRKRDNEELLSKQVRTKLENERKKLDDSES. The segment covering 67 to 90 has biased composition (basic and acidic residues); that stretch reads RDNEELLSKQVRTKLENERKKLDD. Residues 119–441 form the Dynamin-type G domain; the sequence is SFDTPELVVV…HEKYQQNLLP (323 aa). The G1 motif stretch occupies residues 129 to 136; that stretch reads GMQSDGKS. 129–136 provides a ligand contact to GTP; that stretch reads GMQSDGKS. Residues 155-157 form a G2 motif region; it reads GTR. The segment at 169 to 227 is disordered; that stretch reads SKQQPSCRFKKEDYSNSYGGSSSSTSTTSGNSNHNTDKQQNVSSSQGGGGGSNNLNEDK. Residues 183 to 213 are compositionally biased toward low complexity; it reads SNSYGGSSSSTSTTSGNSNHNTDKQQNVSSS. A G3 motif region spans residues 278-281; it reads DTPG. GTP is bound by residues 278 to 282 and 343 to 346; these read DTPGF and TKFD. Residues 343-346 are G4 motif; that stretch reads TKFD. Positions 378 to 381 are G5 motif; the sequence is LPLK. The stretch at 781 to 811 forms a coiled coil; sequence EMFQLGLKELENKLHKLEFQLIDCKKNRDKF. Disordered regions lie at residues 821-840 and 853-904; these read SLNQ…ASSS and NGKF…FDQN. Residues 853-876 are compositionally biased toward polar residues; that stretch reads NGKFSTPDKNSLTMSPFTSPFTQS. The segment covering 877-891 has biased composition (low complexity); it reads NYHQHNNNNYQINQQ.

This sequence belongs to the TRAFAC class dynamin-like GTPase superfamily. Dynamin/Fzo/YdjA family.

It is found in the cytoplasm. It carries out the reaction GTP + H2O = GDP + phosphate + H(+). Its function is as follows. Involved in cytokinesis. May hydrolyze GTP. This chain is Dynamin-like protein C (dlpC), found in Dictyostelium discoideum (Social amoeba).